Here is a 291-residue protein sequence, read N- to C-terminus: 4-hydroxy-tetrahydrodipicolinate synthase (291 aa).

Thr45 contacts pyruvate. Tyr133 acts as the Proton donor/acceptor in catalysis. The Schiff-base intermediate with substrate role is filled by Lys161. Ile203 is a binding site for pyruvate.

The protein belongs to the DapA family. In terms of assembly, homotetramer; dimer of dimers.

The protein localises to the cytoplasm. It catalyses the reaction L-aspartate 4-semialdehyde + pyruvate = (2S,4S)-4-hydroxy-2,3,4,5-tetrahydrodipicolinate + H2O + H(+). Its pathway is amino-acid biosynthesis; L-lysine biosynthesis via DAP pathway; (S)-tetrahydrodipicolinate from L-aspartate: step 3/4. In terms of biological role, catalyzes the condensation of (S)-aspartate-beta-semialdehyde [(S)-ASA] and pyruvate to 4-hydroxy-tetrahydrodipicolinate (HTPA). The sequence is that of 4-hydroxy-tetrahydrodipicolinate synthase from Laribacter hongkongensis (strain HLHK9).